Reading from the N-terminus, the 339-residue chain is Alpha-ketoglutarate-dependent dioxygenase btcD (339 aa).

H96 contacts substrate. 2 residues coordinate Fe cation: H140 and D142. 2-oxoglutarate is bound at residue T173. The segment at 207-230 (DGSDPKFQVPRGSPANVGTNLRPT) is disordered. Residue H302 participates in Fe cation binding. Positions 314 and 318 each coordinate 2-oxoglutarate. Substrate is bound at residue R318.

Belongs to the TfdA dioxygenase family. Fe(2+) serves as cofactor.

It functions in the pathway secondary metabolite biosynthesis; terpenoid biosynthesis. Functionally, alpha-ketoglutarate-dependent dioxygenase; part of the gene cluster that mediates the biosynthesis of betaestacins. The bifunctional terpene synthase btcA converts isopentenyl diphosphate (IPP) and dimethylallyl diphosphate (DMAPP) into the sesterterpene betaestacin I. The C-terminal prenyltransferase (PT) domain of btcA catalyzes formation of GFPP, whereas the N-terminal terpene cyclase (TC) domain catalyzes the cyclization of GFPP into betaestacin I. The cytochrome P450 monooxygenase btcB is then responsible for the six-step oxidation of betaestacin I to yield betaestacin II. The roles of the cytochrome P450 monooxygenase btcC and the alpha-ketoglutarate-dependent dioxygenase btcD have not been identified yet. The chain is Alpha-ketoglutarate-dependent dioxygenase btcD from Neocamarosporium betae (Beet black rot fungus).